The following is a 386-amino-acid chain: Putative prophage major tail sheath protein (386 aa).

It belongs to the myoviridae tail sheath protein family.

It localises to the secreted. This is Putative prophage major tail sheath protein from Pseudomonas aeruginosa (strain UCBPP-PA14).